A 249-amino-acid chain; its full sequence is Pyridoxine 5'-phosphate synthase (249 aa).

N12 lines the 3-amino-2-oxopropyl phosphate pocket. 14 to 15 (DH) contributes to the 1-deoxy-D-xylulose 5-phosphate binding site. R23 is a 3-amino-2-oxopropyl phosphate binding site. Residue H48 is the Proton acceptor of the active site. Residues R50 and H55 each coordinate 1-deoxy-D-xylulose 5-phosphate. The active-site Proton acceptor is the E75. T105 contacts 1-deoxy-D-xylulose 5-phosphate. The active-site Proton donor is H199. 3-amino-2-oxopropyl phosphate-binding positions include G200 and 221–222 (GH).

It belongs to the PNP synthase family. As to quaternary structure, homooctamer; tetramer of dimers.

It localises to the cytoplasm. The enzyme catalyses 3-amino-2-oxopropyl phosphate + 1-deoxy-D-xylulose 5-phosphate = pyridoxine 5'-phosphate + phosphate + 2 H2O + H(+). It participates in cofactor biosynthesis; pyridoxine 5'-phosphate biosynthesis; pyridoxine 5'-phosphate from D-erythrose 4-phosphate: step 5/5. Catalyzes the complicated ring closure reaction between the two acyclic compounds 1-deoxy-D-xylulose-5-phosphate (DXP) and 3-amino-2-oxopropyl phosphate (1-amino-acetone-3-phosphate or AAP) to form pyridoxine 5'-phosphate (PNP) and inorganic phosphate. The chain is Pyridoxine 5'-phosphate synthase from Roseobacter denitrificans (strain ATCC 33942 / OCh 114) (Erythrobacter sp. (strain OCh 114)).